The sequence spans 309 residues: Probable manganese-dependent inorganic pyrophosphatase (309 aa).

Mn(2+)-binding residues include histidine 9, aspartate 13, aspartate 15, aspartate 75, histidine 97, and aspartate 149.

This sequence belongs to the PPase class C family. The cofactor is Mn(2+).

Its subcellular location is the cytoplasm. The catalysed reaction is diphosphate + H2O = 2 phosphate + H(+). The polypeptide is Probable manganese-dependent inorganic pyrophosphatase (Bacillus velezensis (strain DSM 23117 / BGSC 10A6 / LMG 26770 / FZB42) (Bacillus amyloliquefaciens subsp. plantarum)).